A 501-amino-acid chain; its full sequence is MQLISIFLFICFLFLLRKWKKYSKNSQTKKLPPGPWKLPFIGSMHHLAGGRPHRVLRDLAKKYGPLMHLQLGEVSAVVVTSPDMAKEVLKTHDIAFASRPKLLAMDIICYDRCDIAFSPYGEYWKQMRKICVTEVLSAKSVRSFSSIRCDEVVRLIDSIQSSSSSGELVNFKERVIWFTSSMTCRSAFGQLPKEQDMFIKLIREVIRLAEGFDVADIFPSYKFLHVFGRAKRKLLNVHRKVDAIVEDVINEHKKNFATRKNDDHALGGENLIDVLLKLMNDKSLQFPINNDNIKAIIIDMFAAGTETSSTTTVWAMVEMLKNPRVLAKAQAEVREAFRNKVTFDENDVEDLKYLKLVIKETMRLHAPIPLLVPRECRKETEINGYTIPVKTKVMVNVWALGRDPKYWDDVECFKPERFEQCSIDFIGNNFEYLPFGGGRRICPGTSFGLANDYLPLAQLLCHFDWKLPTGMEPKDLDLTELAGMSAASKDDLYLIATPYQP.

A heme-binding site is contributed by Cys-442.

This sequence belongs to the cytochrome P450 family. It depends on heme as a cofactor.

The polypeptide is Cytochrome P450 71D6 (CYP71D6) (Solanum chacoense (Chaco potato)).